The chain runs to 325 residues: Tagatose 1,6-diphosphate aldolase 1 (325 aa).

Belongs to the aldolase LacD family.

It carries out the reaction D-tagatofuranose 1,6-bisphosphate = D-glyceraldehyde 3-phosphate + dihydroxyacetone phosphate. Its pathway is carbohydrate metabolism; D-tagatose 6-phosphate degradation; D-glyceraldehyde 3-phosphate and glycerone phosphate from D-tagatose 6-phosphate: step 2/2. This chain is Tagatose 1,6-diphosphate aldolase 1 (lacD1), found in Enterococcus faecalis (strain ATCC 700802 / V583).